A 629-amino-acid polypeptide reads, in one-letter code: Embryonic polyadenylate-binding protein B (629 aa).

4 consecutive RRM domains span residues 11–89, 99–175, 191–268, and 294–370; these read ASLY…WSQR, GNVF…HFKS, TNVY…RAQK, and VNLY…LAQR. The PABC domain occupies 539–616; that stretch reads QEPLTASLLA…AVAVLQAHQA (78 aa).

It belongs to the polyadenylate-binding protein type-1 family. Interacts with dazl in an RNA-independent manner. The C-terminus can self-associate and also interact with the C-terminus of pabpc1, independently of RNA. RRM 1 and RRM 2 interact with both eif4g1 and paip1, and the C-terminus also interacts with paip1. Prior to oocyte maturation, found in a complex with dazl and pum2 proteins and spdy1 mRNA; pum2 dissociates from the complex during maturation. Interacts with the translation termination factor sup35/erf3.

It is found in the cytoplasm. Its function is as follows. Binds and protects the poly(A) tail of mRNA with or without an AU-rich element (ARE) and prevents mRNA deadenylation. Stimulates the translation of mRNAs to which it is bound during early development. The protein is Embryonic polyadenylate-binding protein B (epabp-b) of Xenopus laevis (African clawed frog).